Here is a 791-residue protein sequence, read N- to C-terminus: Calcium-transporting ATPase CtpE (791 aa).

Transmembrane regions (helical) follow at residues 53–73 (LFVI…LLII), 213–233 (ILQF…YTQL), and 252–272 (VPMV…VGVV). Asp-299 (4-aspartylphosphate intermediate) is an active-site residue. Mg(2+) contacts are provided by Asp-299, Thr-301, and Asp-530. The next 6 helical transmembrane spans lie at 596–616 (VYSV…KIFG), 627–647 (IHVT…LSLA), 664–684 (AALP…LVAY), 697–717 (ASTA…AVVA), 725–745 (VLLV…PLAQ), and 757–777 (VTSV…VLWW).

The protein belongs to the cation transport ATPase (P-type) (TC 3.A.3) family.

Its subcellular location is the cell membrane. The enzyme catalyses Ca(2+)(in) + ATP + H2O = Ca(2+)(out) + ADP + phosphate + H(+). Functionally, P-type ATPase involved in specific uptake of calcium. Essential for growth and maintenance of cell surface integrity under Ca(2+)-deficient conditions. The polypeptide is Calcium-transporting ATPase CtpE (Mycolicibacterium smegmatis (strain ATCC 700084 / mc(2)155) (Mycobacterium smegmatis)).